The chain runs to 352 residues: Ferredoxin--NADP reductase 2 (352 aa).

FAD is bound by residues E36, K44, Y48, I88, L123, D290, and S331.

It belongs to the ferredoxin--NADP reductase type 2 family. Homodimer. It depends on FAD as a cofactor.

The enzyme catalyses 2 reduced [2Fe-2S]-[ferredoxin] + NADP(+) + H(+) = 2 oxidized [2Fe-2S]-[ferredoxin] + NADPH. The sequence is that of Ferredoxin--NADP reductase 2 from Exiguobacterium sibiricum (strain DSM 17290 / CCUG 55495 / CIP 109462 / JCM 13490 / 255-15).